We begin with the raw amino-acid sequence, 151 residues long: Large ribosomal subunit protein uL15 (151 aa).

The segment at 1–51 (MKSLRLEDAVPQSGSRHRKLRVGRGHSAGQGKTSGRGMRGQKCRSGGGVRP) is disordered. Basic residues predominate over residues 15–24 (SRHRKLRVGR). Over residues 26–38 (HSAGQGKTSGRGM) the composition is skewed to gly residues.

It belongs to the universal ribosomal protein uL15 family. In terms of assembly, part of the 50S ribosomal subunit.

Its function is as follows. Binds to the 23S rRNA. The polypeptide is Large ribosomal subunit protein uL15 (Gloeobacter violaceus (strain ATCC 29082 / PCC 7421)).